The chain runs to 427 residues: Large ribosomal subunit protein uL4 (427 aa).

Alanine 2 bears the N-acetylalanine mark. Lysine 14 carries the post-translational modification N6-acetyllysine. Arginine 97 carries the omega-N-methylarginine modification. Position 106 is an N6-acetyllysine (lysine 106). Lysine 239 is covalently cross-linked (Glycyl lysine isopeptide (Lys-Gly) (interchain with G-Cter in SUMO2)). At lysine 259 the chain carries N6-acetyllysine. Threonine 266 carries the phosphothreonine modification. A phosphoserine mark is found at serine 290 and serine 295. Arginine 300 carries the post-translational modification Citrulline. Lysine 327 is covalently cross-linked (Glycyl lysine isopeptide (Lys-Gly) (interchain with G-Cter in SUMO2)). N6-acetyllysine occurs at positions 333 and 353. N6-acetyllysine; alternate is present on lysine 364. A Glycyl lysine isopeptide (Lys-Gly) (interchain with G-Cter in SUMO1); alternate cross-link involves residue lysine 364. Serine 365 is modified (phosphoserine). Residues 369 to 427 (AAVAGKKPVVGKKGKKAAVGVKKQKKPLVGKKAAATKKPAPEKKPAEKKPTTEEKKPAA) form a disordered region. Over residues 377-397 (VVGKKGKKAAVGVKKQKKPLV) the composition is skewed to basic residues. A compositionally biased stretch (basic and acidic residues) spans 407 to 427 (PAPEKKPAEKKPTTEEKKPAA).

It belongs to the universal ribosomal protein uL4 family. As to quaternary structure, component of the large ribosomal subunit. May bind IPO9 with low affinity. Interacts with RBM3. In terms of processing, citrullinated by PADI4.

The protein resides in the cytoplasm. Its function is as follows. Component of the large ribosomal subunit. The ribosome is a large ribonucleoprotein complex responsible for the synthesis of proteins in the cell. The sequence is that of Large ribosomal subunit protein uL4 (RPL4) from Homo sapiens (Human).